The chain runs to 317 residues: Dehydrogenase/reductase SDR family protein 7-like (317 aa).

The Cytoplasmic segment spans residues 1-10; it reads MKNLAERSAG. The helical; Signal-anchor for type II membrane protein transmembrane segment at 11 to 31 threads the bilayer; the sequence is SLYWWLLATLFLPIAIPGLVL. Residues 32-317 are Peroxisomal-facing; it reads KLLTMMKEQR…KKRAEKLNST (286 aa). Residue 52–76 participates in NAD(+) binding; it reads LITGASSGLGEALAHSFFLAGCKVV. Ser-189 serves as a coordination point for substrate. The active-site Proton acceptor is Tyr-202.

It belongs to the short-chain dehydrogenases/reductases (SDR) family.

The protein localises to the peroxisome membrane. In terms of biological role, putative oxidoreductase. This is Dehydrogenase/reductase SDR family protein 7-like from Anopheles gambiae (African malaria mosquito).